The chain runs to 232 residues: MAKKGKKYQEALKLVDKTNLYDPKEAIELAKKTATAKFDETVEAHIKLGVDSRHADQQVRGAVVLPHGTGKTVRILVFAKGEKAIEAEKAGADYVGGDELVAKIQGENWFEFDVVVATPDMMGVVGRLGRVLGPKGLMPNPKSGTVTFDLTKAVNEIKAGKVEYRLDKTNIIHVPLGKASFEETQLVENFRTLLDAVVKAKPAAAKGQYLKSITVTSTMGPGIKINPLKVME.

It belongs to the universal ribosomal protein uL1 family. Part of the 50S ribosomal subunit.

Functionally, binds directly to 23S rRNA. The L1 stalk is quite mobile in the ribosome, and is involved in E site tRNA release. Protein L1 is also a translational repressor protein, it controls the translation of the L11 operon by binding to its mRNA. The polypeptide is Large ribosomal subunit protein uL1 (Alkaliphilus oremlandii (strain OhILAs) (Clostridium oremlandii (strain OhILAs))).